The sequence spans 736 residues: DNA topoisomerase 1 (736 aa).

The Toprim domain maps to 2 to 113 (KHLIIVESPA…SYPRIVFHEI (112 aa)). The Mg(2+) site is built by Glu-8 and Asp-82. One can recognise a Topo IA-type catalytic domain in the interval 129–552 (DMSKVNAQQA…DFYYPFMDKI (424 aa)). The tract at residues 163–168 (SAGRVQ) is interaction with DNA. Tyr-297 acts as the O-(5'-phospho-DNA)-tyrosine intermediate in catalysis. 4 consecutive C4-type zinc fingers follow at residues 572–598 (CPKCGGELVKKNSRYGEFIACNNYPKC), 616–642 (CEKCGGEMVQKFSRNGAFLACNNYPEC), 663–689 (CPECGGDIALKRSKKGSFYGCNNYPKC), and 702–725 (CEKCHYLMSERIYRKKKAHECIKC).

It belongs to the type IA topoisomerase family. As to quaternary structure, monomer. The cofactor is Mg(2+).

It carries out the reaction ATP-independent breakage of single-stranded DNA, followed by passage and rejoining.. Functionally, releases the supercoiling and torsional tension of DNA, which is introduced during the DNA replication and transcription, by transiently cleaving and rejoining one strand of the DNA duplex. Introduces a single-strand break via transesterification at a target site in duplex DNA. The scissile phosphodiester is attacked by the catalytic tyrosine of the enzyme, resulting in the formation of a DNA-(5'-phosphotyrosyl)-enzyme intermediate and the expulsion of a 3'-OH DNA strand. The free DNA strand then undergoes passage around the unbroken strand, thus removing DNA supercoils. Finally, in the religation step, the DNA 3'-OH attacks the covalent intermediate to expel the active-site tyrosine and restore the DNA phosphodiester backbone. This Helicobacter pylori (strain ATCC 700392 / 26695) (Campylobacter pylori) protein is DNA topoisomerase 1.